Reading from the N-terminus, the 289-residue chain is ATP synthase subunit a (289 aa).

A run of 6 helical transmembrane segments spans residues 43–63 (AFHV…VLLF), 103–123 (VIAP…AVDL), 160–180 (FSVF…GGFI), 193–213 (IFVQ…TLIA), 232–252 (VFIL…GLGV), and 259–279 (AVFH…LTIV).

The protein belongs to the ATPase A chain family. F-type ATPases have 2 components, CF(1) - the catalytic core - and CF(0) - the membrane proton channel. CF(1) has five subunits: alpha(3), beta(3), gamma(1), delta(1), epsilon(1). CF(0) has three main subunits: a(1), b(2) and c(9-12). The alpha and beta chains form an alternating ring which encloses part of the gamma chain. CF(1) is attached to CF(0) by a central stalk formed by the gamma and epsilon chains, while a peripheral stalk is formed by the delta and b chains.

Its subcellular location is the cell inner membrane. In terms of biological role, key component of the proton channel; it plays a direct role in the translocation of protons across the membrane. This is ATP synthase subunit a from Pseudomonas fluorescens (strain Pf0-1).